The sequence spans 273 residues: uncharacterized protein (273 aa).

It belongs to the PhyH family.

This is an uncharacterized protein from Mycobacterium tuberculosis (strain ATCC 25618 / H37Rv).